Here is a 243-residue protein sequence, read N- to C-terminus: MAIRVKNLNFFYGSSQTLFDINLEAEEGDTVVLLGPSGAGKSTLIRTLNLLEVPKSGELSIANNEFNLSNAMANPKAIQQLRQDVGMVFQQYHLWPHLTVIENLIEAPMKVRGVSENEAKTDAMELLKRLRLEQLADRFPLHLSGGQQQRVAIARALMMKPQVLLFDEPTAALDPEITAQVVDIIKELQETGITQVIVTHEVNVAQKVATKVVYMEQGKIVEMGSADCFENPKTEQFKHYLSH.

The region spanning 3–242 (IRVKNLNFFY…KTEQFKHYLS (240 aa)) is the ABC transporter domain. 35 to 42 (GPSGAGKS) is an ATP binding site.

It belongs to the ABC transporter superfamily. The complex is composed of two ATP-binding proteins (ArtP), two transmembrane proteins (ArtM and ArtQ) and a solute-binding protein (ArtI).

The protein localises to the cell inner membrane. The catalysed reaction is a polar amino acid(out) + ATP + H2O = a polar amino acid(in) + ADP + phosphate + H(+). It catalyses the reaction L-arginine(out) + ATP + H2O = L-arginine(in) + ADP + phosphate + H(+). In terms of biological role, part of the ABC transporter complex ArtPIQM involved in arginine transport. Probably responsible for energy coupling to the transport system. The protein is Arginine transport ATP-binding protein ArtP (artP) of Haemophilus influenzae (strain ATCC 51907 / DSM 11121 / KW20 / Rd).